A 208-amino-acid polypeptide reads, in one-letter code: Putative 3-methyladenine DNA glycosylase (208 aa).

It belongs to the DNA glycosylase MPG family.

The chain is Putative 3-methyladenine DNA glycosylase from Lactobacillus delbrueckii subsp. bulgaricus (strain ATCC BAA-365 / Lb-18).